The chain runs to 206 residues: Uridine kinase (206 aa).

Gly-11–Ser-18 is an ATP binding site.

It belongs to the uridine kinase family.

It is found in the cytoplasm. It carries out the reaction uridine + ATP = UMP + ADP + H(+). It catalyses the reaction cytidine + ATP = CMP + ADP + H(+). It participates in pyrimidine metabolism; CTP biosynthesis via salvage pathway; CTP from cytidine: step 1/3. The protein operates within pyrimidine metabolism; UMP biosynthesis via salvage pathway; UMP from uridine: step 1/1. The polypeptide is Uridine kinase (Clostridium botulinum (strain 657 / Type Ba4)).